Consider the following 335-residue polypeptide: Protein-arginine kinase (335 aa).

The Phosphagen kinase C-terminal domain occupies 21 to 244 (IVMSSRIRLA…NQIIHDEKQI (224 aa)). ATP is bound by residues 24–28 (SSRIR), H82, R115, 166–170 (RASVM), and 197–202 (RGIYGE).

This sequence belongs to the ATP:guanido phosphotransferase family.

The catalysed reaction is L-arginyl-[protein] + ATP = N(omega)-phospho-L-arginyl-[protein] + ADP + H(+). In terms of biological role, catalyzes the specific phosphorylation of arginine residues in proteins. The sequence is that of Protein-arginine kinase from Staphylococcus aureus (strain Mu3 / ATCC 700698).